Reading from the N-terminus, the 168-residue chain is ATP synthase subunit b (168 aa).

The helical transmembrane segment at 13–33 (WTFLFQTLNLLVVMGLLYVFL) threads the bilayer.

It belongs to the ATPase B chain family. As to quaternary structure, F-type ATPases have 2 components, F(1) - the catalytic core - and F(0) - the membrane proton channel. F(1) has five subunits: alpha(3), beta(3), gamma(1), delta(1), epsilon(1). F(0) has three main subunits: a(1), b(2) and c(10-14). The alpha and beta chains form an alternating ring which encloses part of the gamma chain. F(1) is attached to F(0) by a central stalk formed by the gamma and epsilon chains, while a peripheral stalk is formed by the delta and b chains.

It localises to the cell membrane. Its function is as follows. F(1)F(0) ATP synthase produces ATP from ADP in the presence of a proton or sodium gradient. F-type ATPases consist of two structural domains, F(1) containing the extramembraneous catalytic core and F(0) containing the membrane proton channel, linked together by a central stalk and a peripheral stalk. During catalysis, ATP synthesis in the catalytic domain of F(1) is coupled via a rotary mechanism of the central stalk subunits to proton translocation. Component of the F(0) channel, it forms part of the peripheral stalk, linking F(1) to F(0). This is ATP synthase subunit b from Moorella thermoacetica (strain ATCC 39073 / JCM 9320).